A 370-amino-acid chain; its full sequence is Cyclin-A3-4 (370 aa).

The protein belongs to the cyclin family. Cyclin AB subfamily. As to quaternary structure, interacts with FZR2/CCS52A1, FZR1/CCS52A2 and FZR3/CCS52B.

This is Cyclin-A3-4 (CYCA3-4) from Arabidopsis thaliana (Mouse-ear cress).